The chain runs to 355 residues: 3-dehydroquinate synthase (355 aa).

Residues 71-76 (EGEERK), 105-109 (GVVGD), 129-130 (TS), K142, and K151 contribute to the NAD(+) site. The Zn(2+) site is built by E184, H246, and H263.

This sequence belongs to the sugar phosphate cyclases superfamily. Dehydroquinate synthase family. Requires Co(2+) as cofactor. It depends on Zn(2+) as a cofactor. NAD(+) is required as a cofactor.

The protein localises to the cytoplasm. It carries out the reaction 7-phospho-2-dehydro-3-deoxy-D-arabino-heptonate = 3-dehydroquinate + phosphate. It participates in metabolic intermediate biosynthesis; chorismate biosynthesis; chorismate from D-erythrose 4-phosphate and phosphoenolpyruvate: step 2/7. Functionally, catalyzes the conversion of 3-deoxy-D-arabino-heptulosonate 7-phosphate (DAHP) to dehydroquinate (DHQ). This chain is 3-dehydroquinate synthase, found in Streptococcus pneumoniae (strain JJA).